We begin with the raw amino-acid sequence, 71 residues long: Large ribosomal subunit protein bL31 (71 aa).

Positions 16, 18, 37, and 40 each coordinate Zn(2+).

The protein belongs to the bacterial ribosomal protein bL31 family. Type A subfamily. As to quaternary structure, part of the 50S ribosomal subunit. The cofactor is Zn(2+).

Binds the 23S rRNA. The sequence is that of Large ribosomal subunit protein bL31 from Marinomonas sp. (strain MWYL1).